Reading from the N-terminus, the 210-residue chain is DNA replication complex GINS protein PSF3 (210 aa).

It belongs to the GINS3/PSF3 family. As to quaternary structure, component of the GINS complex which is a heterotetramer of gins1/psf1, gins2/psf2, gins3/psf3 and gins4/sld5. Component of the CMG helicase complex, composed of the mcm2-7 complex, the GINS complex and cdc45.

Its subcellular location is the nucleus. It is found in the chromosome. Its function is as follows. Required for correct functioning of the GINS complex, a complex that plays an essential role in the initiation of DNA replication, and progression of DNA replication forks. GINS complex is a core component of CDC45-MCM-GINS (CMG) helicase, the molecular machine that unwinds template DNA during replication, and around which the replisome is built. The polypeptide is DNA replication complex GINS protein PSF3 (Xenopus laevis (African clawed frog)).